Here is a 109-residue protein sequence, read N- to C-terminus: MSITDVLSADDIAAALQECRDPDTFEPQKFFQTSGLSKMSANQVKDVFRFIDNDQSGYLDEEELKFFLQKFESGARELTESETKSLMAAADNDGDGKIGAEEFQEMVHS.

S2 is subject to N-acetylserine. EF-hand domains lie at 39–74 and 78–109; these read MSAN…FESG and LTES…MVHS. Residues D52, D54, S56, Y58, E63, D91, D93, D95, K97, and E102 each contribute to the Ca(2+) site.

Belongs to the parvalbumin family.

In terms of biological role, has some calmodulin-like activity with respect to enzyme activation and growth regulation. Binds two calcium ions. The protein is Oncomodulin-1 (OCM) of Homo sapiens (Human).